Consider the following 233-residue polypeptide: 7-cyano-7-deazaguanine synthase (233 aa).

7–17 (LSGGLDSLVTS) provides a ligand contact to ATP. Residues C195, C206, C209, and C212 each contribute to the Zn(2+) site.

This sequence belongs to the QueC family. Requires Zn(2+) as cofactor.

The enzyme catalyses 7-carboxy-7-deazaguanine + NH4(+) + ATP = 7-cyano-7-deazaguanine + ADP + phosphate + H2O + H(+). It participates in purine metabolism; 7-cyano-7-deazaguanine biosynthesis. In terms of biological role, catalyzes the ATP-dependent conversion of 7-carboxy-7-deazaguanine (CDG) to 7-cyano-7-deazaguanine (preQ(0)). The chain is 7-cyano-7-deazaguanine synthase from Methanococcus vannielii (strain ATCC 35089 / DSM 1224 / JCM 13029 / OCM 148 / SB).